Reading from the N-terminus, the 732-residue chain is Acylamino-acid-releasing enzyme (732 aa).

The residue at position 1 (M1) is an N-acetylmethionine. Residues S185 and S187 each carry the phosphoserine modification. Active-site charge relay system residues include S587, D675, and H707.

As to quaternary structure, homotetramer. In terms of tissue distribution, expressed in erythrocytes (at protein level).

It localises to the cytoplasm. The enzyme catalyses Cleavage of an N-acetyl or N-formyl amino acid from the N-terminus of a polypeptide.. With respect to regulation, homotetramerization is required for activity. Tetramerization results in the formation of a gated channel which is involved in substrate selection and substrate access to the catalytic sites. This enzyme catalyzes the hydrolysis of the N-terminal peptide bond of an N-acetylated peptide to generate an N-acetylated amino acid and a peptide with a free N-terminus. It preferentially cleaves off Ac-Ala, Ac-Met and Ac-Ser. Also, involved in the degradation of oxidized and glycated proteins. The protein is Acylamino-acid-releasing enzyme (APEH) of Homo sapiens (Human).